The chain runs to 161 residues: Phosphopantetheine adenylyltransferase (161 aa).

S11 is a substrate binding site. Residues 11–12 and H19 each bind ATP; that span reads SF. The substrate site is built by K43, L75, and R89. ATP is bound by residues 90–92, E100, and 125–131; these read GLR and YSYLSSS.

This sequence belongs to the bacterial CoaD family. In terms of assembly, homohexamer. Mg(2+) is required as a cofactor.

It localises to the cytoplasm. It carries out the reaction (R)-4'-phosphopantetheine + ATP + H(+) = 3'-dephospho-CoA + diphosphate. It functions in the pathway cofactor biosynthesis; coenzyme A biosynthesis; CoA from (R)-pantothenate: step 4/5. Its function is as follows. Reversibly transfers an adenylyl group from ATP to 4'-phosphopantetheine, yielding dephospho-CoA (dPCoA) and pyrophosphate. This chain is Phosphopantetheine adenylyltransferase, found in Geobacter sp. (strain M21).